A 327-amino-acid chain; its full sequence is MGGGRLPPLWLPLLIAWSEWGNCCLDAPPVVRSPCLQPVRDRNRERNPGSPQLLPYGDRLEVACIFPAHDWPEVSIRVHLCYWPEIVRSLVVDARSGQVLHNDASCYIAGGRWRFEDGGAAQRLSLSFRLITETAGTYTCVLGNETHSLATETTALVADVHDLRHSDRSCDLAFGSRSQTRYLWTPDPSRLRSINCGWEGERHRVVHYIPGTSGLLPSCEEDERELCVPFISQSIADNNCSRRHRVDGARRRYHLRRDYWLTDPKIGLLAAGSVALTSLCHLLCYWCSESYRRLNTEEENEAAEETAAGEASAVAAAAVSEEEQQRE.

A helical membrane pass occupies residues 266-285 (IGLLAAGSVALTSLCHLLCY). Positions 297–327 (EEENEAAEETAAGEASAVAAAAVSEEEQQRE) are disordered. The segment covering 305–319 (ETAAGEASAVAAAAV) has biased composition (low complexity).

Belongs to the HHV-5 UL14 protein family.

Its subcellular location is the host membrane. This is an uncharacterized protein from Human cytomegalovirus (strain Merlin) (HHV-5).